A 901-amino-acid chain; its full sequence is Protein translocase subunit SecA (901 aa).

ATP-binding positions include Q87, 105–109, and D512; that span reads GEGKT. Positions 859 to 901 are disordered; that stretch reads HQDDDSAAAAALAAQTGERKVGRNDPCPCGSGKKYKQCHGRLQ. C885, C887, C896, and H897 together coordinate Zn(2+). Positions 891 to 901 are enriched in basic residues; the sequence is KKYKQCHGRLQ.

It belongs to the SecA family. In terms of assembly, monomer and homodimer. Part of the essential Sec protein translocation apparatus which comprises SecA, SecYEG and auxiliary proteins SecDF-YajC and YidC. Zn(2+) serves as cofactor.

It is found in the cell inner membrane. The protein localises to the cytoplasm. It catalyses the reaction ATP + H2O + cellular proteinSide 1 = ADP + phosphate + cellular proteinSide 2.. In terms of biological role, part of the Sec protein translocase complex. Interacts with the SecYEG preprotein conducting channel. Has a central role in coupling the hydrolysis of ATP to the transfer of proteins into and across the cell membrane, serving both as a receptor for the preprotein-SecB complex and as an ATP-driven molecular motor driving the stepwise translocation of polypeptide chains across the membrane. This Shigella dysenteriae serotype 1 (strain Sd197) protein is Protein translocase subunit SecA.